The primary structure comprises 203 residues: Probable deoxycytidylate deaminase (203 aa).

Residues 27–163 (HWDDYFMATS…PTYRASKRML (137 aa)) enclose the CMP/dCMP-type deaminase domain. Position 102 (His-102) interacts with Zn(2+). The active-site Proton donor is the Glu-104. Cys-128 and Cys-131 together coordinate Zn(2+).

It belongs to the cytidine and deoxycytidylate deaminase family. Zn(2+) serves as cofactor.

The catalysed reaction is dCMP + H2O + H(+) = dUMP + NH4(+). Its function is as follows. Supplies the nucleotide substrate for thymidylate synthetase. This chain is Probable deoxycytidylate deaminase, found in Drosophila melanogaster (Fruit fly).